The sequence spans 1565 residues: Major cell-surface adhesin PAc (1565 aa).

Positions 1 to 38 are cleaved as a signal peptide; it reads MKVKKTYGFRKSKISKTLCGAVLGTVAAVSVAGQKVFA. The span at 42–54 shows a compositional bias: low complexity; that stretch reads TTTSDVDTKVVGT. The tract at residues 42–81 is disordered; that stretch reads TTTSDVDTKVVGTQTGNPATNLPEAQGSASKEAEQSQTKL. Over residues 72–81 the composition is skewed to basic and acidic residues; it reads KEAEQSQTKL. 4 Ag I/II A repeats span residues 146 to 220, 221 to 302, 303 to 384, and 385 to 466; these read KKTT…QKTN, AANQ…QEAN, AANE…KKAN, and AANE…QKDL. Residues 203 to 448 are heptad repeats of Y-[EQ]-X-X-L-A-X; the sequence is EAKLAQYQAD…KRNADAKADY (246 aa). Residues 461–834 are V-region (lectin-like); the sequence is KYQKDLADYP…VNVPKVTKEK (374 aa). Disordered regions lie at residues 827–985 and 1486–1511; these read VPKV…PTPP and NTVK…PRTS. One copy of the P1 repeat lies at 848-887; that stretch reads TYETEKPLKPAPVAPNYEKEPTPPTRTPDQAEPNKPTPPT. The P2 repeat unit spans residues 888 to 926; it reads YETEKPLEPAPVEPSYEAEPTPPTRTPDQAEPNKPTPPT. Residues 927 to 964 form a P3 repeat; it reads YETEKPLEPAPVEPSYEAEPTPPTPTPDQPEPNKPVEP. The span at 946 to 961 shows a compositional bias: pro residues; the sequence is PTPPTPTPDQPEPNKP. The LPXTG sorting signal motif lies at 1532 to 1536; it reads LPNTG. Pentaglycyl murein peptidoglycan amidated threonine is present on threonine 1535. The propeptide at 1536-1565 is removed by sortase; it reads GVTNNAYMPLLGIIGLVTSFSLLGLKAKKD.

The protein belongs to the antigen I/II family.

It localises to the secreted. The protein resides in the cell wall. Its function is as follows. Surface protein antigen implicated in dental caries. The chain is Major cell-surface adhesin PAc from Streptococcus mutans.